The primary structure comprises 325 residues: Elongation factor P--(R)-beta-lysine ligase (325 aa).

76-78 (SPE) is a binding site for substrate. ATP is bound by residues 100–102 (RNE) and Asn109. Tyr118 contacts substrate. 244-245 (EL) contacts ATP. Glu251 is a binding site for substrate. Gly300 serves as a coordination point for ATP.

It belongs to the class-II aminoacyl-tRNA synthetase family. EpmA subfamily. Homodimer.

The enzyme catalyses D-beta-lysine + L-lysyl-[protein] + ATP = N(6)-((3R)-3,6-diaminohexanoyl)-L-lysyl-[protein] + AMP + diphosphate + H(+). Its function is as follows. With EpmB is involved in the beta-lysylation step of the post-translational modification of translation elongation factor P (EF-P). Catalyzes the ATP-dependent activation of (R)-beta-lysine produced by EpmB, forming a lysyl-adenylate, from which the beta-lysyl moiety is then transferred to the epsilon-amino group of a conserved specific lysine residue in EF-P. The protein is Elongation factor P--(R)-beta-lysine ligase of Hamiltonella defensa subsp. Acyrthosiphon pisum (strain 5AT).